A 778-amino-acid polypeptide reads, in one-letter code: Probable cation-transporting ATPase exp7 (778 aa).

The Cytoplasmic segment spans residues 1 to 37 (MDKNKIMGLTQREVKERQAEGLVNDFTASASTSTWQI). Residues 38–57 (VKRNVFTLFNALNFAIALAL) traverse the membrane as a helical segment. At 58 to 64 (AFVQAWS) the chain is on the extracellular side. The helical transmembrane segment at 65 to 84 (NLVFFAVICFNAFSGIVTEL) threads the bilayer. Topologically, residues 85 to 209 (RAKHMVDKLN…PINSRIMKSL (125 aa)) are cytoplasmic. The chain crosses the membrane as a helical span at residues 210-229 (DKLAGFTGKIIIPFGLALLL). Over 230-242 (EALLLKGLPLKSS) the chain is Extracellular. A helical transmembrane segment spans residues 243-260 (VVNSSTALLGMLPKGIAL). The Cytoplasmic segment spans residues 261 to 586 (LTITSLLTAV…FEGRRVVNNI (326 aa)). Residue D298 is the 4-aspartylphosphate intermediate of the active site. Mg(2+) is bound by residues D532 and D536. A helical transmembrane segment spans residues 587–606 (AHIAPIFLIKTIYSFLLAVI). At 607–624 (CIASALLGRSEWILIFPF) the chain is on the extracellular side. The chain crosses the membrane as a helical span at residues 625-645 (IPIQITMIDQFVEGFPPFVLT). Residues 646–663 (FERNIKPVEQNFLRKSML) are Cytoplasmic-facing. Residues 664–684 (RALPSALMVVFSVLFVKMFGA) traverse the membrane as a helical segment. Topologically, residues 685 to 689 (SQGWS) are extracellular. Residues 690–708 (ELEISTLLYYLLGSIGFLS) form a helical membrane-spanning segment. Over 709–716 (VFRACMPF) the chain is Cytoplasmic. A helical transmembrane segment spans residues 717 to 739 (TLWRVLLIVWSVGGFLATALFPR). The Extracellular segment spans residues 740-757 (IQKLLEISTLTEQTLPVY). Residues 758–777 (GVMMLVFTVIFILTSRYQAK) form a helical membrane-spanning segment. Position 778 (K778) is a topological domain, cytoplasmic.

This sequence belongs to the cation transport ATPase (P-type) (TC 3.A.3) family.

The protein resides in the cell membrane. The catalysed reaction is ATP + H2O = ADP + phosphate + H(+). This is Probable cation-transporting ATPase exp7 (exp7) from Streptococcus pneumoniae serotype 4 (strain ATCC BAA-334 / TIGR4).